The chain runs to 434 residues: MQSEAQSPRSSQICSTEPVFGGHQPRRVSHAVDVRWGGQLVTIGGDAPVRVQSMTNTDTADAIGTAIQIKELANAGSELVRITVNTPEAAAAVPAIREQLDRMGVTVPLVGDFHYNGHLLLRDYPGCAEALSKYRINPGNVGQGAKRDTQFALMIEAAAKYDKAVRIGVNWGSLDQDLLARMMDENGARAQPWGAQSVMYEALIQSAIGSAERAVELGLGRDRIVLSCKVSGVQDLIAVYRELGRRCGFALHLGLTEAGMGSKGIVASTAALGVLLQEGIGDTIRISLTPEPGAPRTGEVIVGQEILQTMGLRSFAPMVIACPGCGRTTSTLFQELAMQIQTYLREQMPVWRKEYPGVEKMNVAVMGCIVNGPGESKHANIGISLPGSGENPAAPVFIDGEKVKTLRGERIAEEFQQIVSDYVARNYGRTEALN.

Residues 1 to 15 (MQSEAQSPRSSQICS) are compositionally biased toward polar residues. The interval 1-24 (MQSEAQSPRSSQICSTEPVFGGHQ) is disordered. 4 residues coordinate [4Fe-4S] cluster: cysteine 322, cysteine 325, cysteine 368, and glutamate 375.

This sequence belongs to the IspG family. It depends on [4Fe-4S] cluster as a cofactor.

The enzyme catalyses (2E)-4-hydroxy-3-methylbut-2-enyl diphosphate + oxidized [flavodoxin] + H2O + 2 H(+) = 2-C-methyl-D-erythritol 2,4-cyclic diphosphate + reduced [flavodoxin]. Its pathway is isoprenoid biosynthesis; isopentenyl diphosphate biosynthesis via DXP pathway; isopentenyl diphosphate from 1-deoxy-D-xylulose 5-phosphate: step 5/6. In terms of biological role, converts 2C-methyl-D-erythritol 2,4-cyclodiphosphate (ME-2,4cPP) into 1-hydroxy-2-methyl-2-(E)-butenyl 4-diphosphate. In Burkholderia ambifaria (strain MC40-6), this protein is 4-hydroxy-3-methylbut-2-en-1-yl diphosphate synthase (flavodoxin).